The chain runs to 179 residues: Large ribosomal subunit protein uL5 (179 aa).

Belongs to the universal ribosomal protein uL5 family. In terms of assembly, part of the 50S ribosomal subunit; part of the 5S rRNA/L5/L18/L25 subcomplex. Contacts the 5S rRNA and the P site tRNA. Forms a bridge to the 30S subunit in the 70S ribosome.

Functionally, this is one of the proteins that bind and probably mediate the attachment of the 5S RNA into the large ribosomal subunit, where it forms part of the central protuberance. In the 70S ribosome it contacts protein S13 of the 30S subunit (bridge B1b), connecting the 2 subunits; this bridge is implicated in subunit movement. Contacts the P site tRNA; the 5S rRNA and some of its associated proteins might help stabilize positioning of ribosome-bound tRNAs. This chain is Large ribosomal subunit protein uL5, found in Pectobacterium carotovorum subsp. carotovorum (strain PC1).